Reading from the N-terminus, the 159-residue chain is SsrA-binding protein (159 aa).

A compositionally biased stretch (basic and acidic residues) spans 138–153; sequence KREDGKDKDWSREKER. The disordered stretch occupies residues 138 to 159; sequence KREDGKDKDWSREKERLMKHKA.

It belongs to the SmpB family.

The protein resides in the cytoplasm. Required for rescue of stalled ribosomes mediated by trans-translation. Binds to transfer-messenger RNA (tmRNA), required for stable association of tmRNA with ribosomes. tmRNA and SmpB together mimic tRNA shape, replacing the anticodon stem-loop with SmpB. tmRNA is encoded by the ssrA gene; the 2 termini fold to resemble tRNA(Ala) and it encodes a 'tag peptide', a short internal open reading frame. During trans-translation Ala-aminoacylated tmRNA acts like a tRNA, entering the A-site of stalled ribosomes, displacing the stalled mRNA. The ribosome then switches to translate the ORF on the tmRNA; the nascent peptide is terminated with the 'tag peptide' encoded by the tmRNA and targeted for degradation. The ribosome is freed to recommence translation, which seems to be the essential function of trans-translation. This is SsrA-binding protein from Pseudoalteromonas translucida (strain TAC 125).